We begin with the raw amino-acid sequence, 75 residues long: MANKPFFRRRKVCPFSGDNAPVIDYKDTRLLQRYISERGKIVPSRITAVSAKKQRELAAAIKRARFLALLPYAVK.

Belongs to the bacterial ribosomal protein bS18 family. In terms of assembly, part of the 30S ribosomal subunit. Forms a tight heterodimer with protein bS6.

In terms of biological role, binds as a heterodimer with protein bS6 to the central domain of the 16S rRNA, where it helps stabilize the platform of the 30S subunit. The protein is Small ribosomal subunit protein bS18 of Cereibacter sphaeroides (strain KD131 / KCTC 12085) (Rhodobacter sphaeroides).